The chain runs to 436 residues: AP-2 complex subunit mu-B (436 aa).

Residues R170–R435 enclose the MHD domain. The a 1,2-diacyl-sn-glycero-3-phospho-(1D-myo-inositol-3,4,5-trisphosphate) site is built by K342, K346, and K355.

It belongs to the adaptor complexes medium subunit family. Adaptor protein complex 2 (AP-2) is a heterotetramer composed of two large adaptins (alpha-type subunit and beta-type subunit), a medium adaptin (mu-type subunit) and a small adaptin (sigma-type subunit).

The protein resides in the cell membrane. The protein localises to the membrane. It is found in the coated pit. Component of the adaptor complexes which link clathrin to receptors in coated vesicles. Clathrin-associated protein complexes are believed to interact with the cytoplasmic tails of membrane proteins, leading to their selection and concentration. AP50 is a subunit of the plasma membrane adaptor. The complex binds polyphosphoinositide-containing lipids. In Danio rerio (Zebrafish), this protein is AP-2 complex subunit mu-B (ap2m1b).